A 526-amino-acid polypeptide reads, in one-letter code: Na(+)/H(+) antiporter NhaB (526 aa).

Helical transmembrane passes span 13–33 (FLGQ…VVNP), 98–118 (LLLI…LFVF), 133–155 (LAFC…VAVV), 208–228 (LLMH…VGEP), 244–264 (FFLR…LVCL), 309–329 (ALIG…VGLI), 355–375 (EALP…VIIE), 395–415 (LALF…VFVG), 452–472 (VATP…LAPL), and 481–501 (VWMA…CVQF).

It belongs to the NhaB Na(+)/H(+) (TC 2.A.34) antiporter family.

The protein resides in the cell inner membrane. The catalysed reaction is 2 Na(+)(in) + 3 H(+)(out) = 2 Na(+)(out) + 3 H(+)(in). Na(+)/H(+) antiporter that extrudes sodium in exchange for external protons. This chain is Na(+)/H(+) antiporter NhaB, found in Serratia proteamaculans (strain 568).